The chain runs to 285 residues: (3S)-malyl-CoA thioesterase (285 aa).

2 residues coordinate substrate: Arg-70 and Glu-122. Glu-122 and Asp-148 together coordinate Mg(2+).

The protein belongs to the HpcH/HpaI aldolase family. In terms of assembly, homodimer or homotrimer. Mg(2+) is required as a cofactor.

The catalysed reaction is (S)-malyl-CoA + H2O = (S)-malate + CoA + H(+). With respect to regulation, reversibly inhibited by EDTA. Stimulated by the divalent cations Mg(2+) and Mn(2+). Its function is as follows. Catalyzes the hydrolysis of (3S)-malyl-CoA to (3S)-malate and free CoA. Inactive towards beta-methylmalyl-CoA and other CoA esters. This is (3S)-malyl-CoA thioesterase from Cereibacter sphaeroides (strain ATCC 17023 / DSM 158 / JCM 6121 / CCUG 31486 / LMG 2827 / NBRC 12203 / NCIMB 8253 / ATH 2.4.1.) (Rhodobacter sphaeroides).